Here is an 81-residue protein sequence, read N- to C-terminus: Large ribosomal subunit protein bL27 (81 aa).

A disordered region spans residues 1-22 (MAHKTGQSSSSNGRESKSKRLG).

Belongs to the bacterial ribosomal protein bL27 family.

The chain is Large ribosomal subunit protein bL27 from Opitutus terrae (strain DSM 11246 / JCM 15787 / PB90-1).